The following is a 73-amino-acid chain: Translation initiation factor IF-1 (73 aa).

Positions 1–73 constitute an S1-like domain; that stretch reads MANKEELIEF…SKGRITYRAR (73 aa).

The protein belongs to the IF-1 family. In terms of assembly, component of the 30S ribosomal translation pre-initiation complex which assembles on the 30S ribosome in the order IF-2 and IF-3, IF-1 and N-formylmethionyl-tRNA(fMet); mRNA recruitment can occur at any time during PIC assembly.

The protein localises to the cytoplasm. In terms of biological role, one of the essential components for the initiation of protein synthesis. Stabilizes the binding of IF-2 and IF-3 on the 30S subunit to which N-formylmethionyl-tRNA(fMet) subsequently binds. Helps modulate mRNA selection, yielding the 30S pre-initiation complex (PIC). Upon addition of the 50S ribosomal subunit IF-1, IF-2 and IF-3 are released leaving the mature 70S translation initiation complex. The polypeptide is Translation initiation factor IF-1 (Acinetobacter baylyi (strain ATCC 33305 / BD413 / ADP1)).